We begin with the raw amino-acid sequence, 423 residues long: Lipoamide acyltransferase component of branched-chain alpha-keto acid dehydrogenase complex (423 aa).

The Lipoyl-binding domain maps to 3 to 78; the sequence is THVIKMPDIG…AVGSELIRIE (76 aa). Lys44 is subject to N6-lipoyllysine. Residues 137–174 form the Peripheral subunit-binding (PSBD) domain; it reads LASPAVRKRALDAGIELRYVHGSGPAGRILHEDLDAFM. Catalysis depends on residues His395 and Asp399.

Belongs to the 2-oxoacid dehydrogenase family. Forms a 24-polypeptide structural core with octahedral symmetry. It depends on (R)-lipoate as a cofactor.

It carries out the reaction N(6)-[(R)-dihydrolipoyl]-L-lysyl-[protein] + 2-methylpropanoyl-CoA = N(6)-[(R)-S(8)-2-methylpropanoyldihydrolipoyl]-L-lysyl-[protein] + CoA. Its function is as follows. The branched-chain alpha-keto dehydrogenase complex catalyzes the overall conversion of alpha-keto acids to acyl-CoA and CO(2). It contains multiple copies of three enzymatic components: branched-chain alpha-keto acid decarboxylase (E1), lipoamide acyltransferase (E2) and lipoamide dehydrogenase (E3). In Pseudomonas putida (Arthrobacter siderocapsulatus), this protein is Lipoamide acyltransferase component of branched-chain alpha-keto acid dehydrogenase complex (bkdB).